A 393-amino-acid chain; its full sequence is S-adenosylmethionine synthase (393 aa).

Position 9 (glutamate 9) interacts with Mg(2+). An ATP-binding site is contributed by histidine 15. Residue glutamate 43 participates in K(+) binding. Glutamate 56 and glutamine 99 together coordinate L-methionine. ATP contacts are provided by residues 167 to 169, 235 to 238, aspartate 246, 252 to 253, alanine 269, lysine 273, and lysine 277; these read HGK, SGRF, and RK. Aspartate 246 provides a ligand contact to L-methionine. Lysine 277 is an L-methionine binding site.

This sequence belongs to the AdoMet synthase family. Homotetramer. It depends on Mn(2+) as a cofactor. Requires Mg(2+) as cofactor. Co(2+) is required as a cofactor. The cofactor is K(+). In terms of tissue distribution, root.

It localises to the cytoplasm. It catalyses the reaction L-methionine + ATP + H2O = S-adenosyl-L-methionine + phosphate + diphosphate. The protein operates within amino-acid biosynthesis; S-adenosyl-L-methionine biosynthesis; S-adenosyl-L-methionine from L-methionine: step 1/1. In terms of biological role, catalyzes the formation of S-adenosylmethionine from methionine and ATP. The reaction comprises two steps that are both catalyzed by the same enzyme: formation of S-adenosylmethionine (AdoMet) and triphosphate, and subsequent hydrolysis of the triphosphate. In Pinus banksiana (Jack pine), this protein is S-adenosylmethionine synthase (METK).